Reading from the N-terminus, the 397-residue chain is Protein RecA (397 aa).

A disordered region spans residues 1–23 (MALETKPAKDPAAEDKHELDPKR). 83-90 (GPESSGKT) is an ATP binding site.

The protein belongs to the RecA family.

The protein resides in the cytoplasm. Functionally, can catalyze the hydrolysis of ATP in the presence of single-stranded DNA, the ATP-dependent uptake of single-stranded DNA by duplex DNA, and the ATP-dependent hybridization of homologous single-stranded DNAs. It interacts with LexA causing its activation and leading to its autocatalytic cleavage. This chain is Protein RecA, found in Bifidobacterium longum (strain NCC 2705).